Reading from the N-terminus, the 516-residue chain is ADP-ribosylation factor GTPase-activating protein 3 (516 aa).

The Arf-GAP domain occupies 10–126 (LTIFKRLRSV…IKSLASQATR (117 aa)). A C4-type zinc finger spans residues 25 to 48 (CFDCGAKNPSWASITYGVFLCIDC). The segment at 170-199 (AEPSSLTSRPAETTLENNEGGQEQGPCVEG) is disordered. Positions 173–190 (SSLTSRPAETTLENNEGG) are enriched in polar residues. Ser231 bears the Phosphoserine mark. Residues 243–264 (NEIEKQAQAADKMKEQEDLAKA) are a coiled coil. 4 positions are modified to phosphoserine: Ser270, Ser274, Ser331, and Ser370. The tract at residues 393–417 (TTGYSDRPTARHKPDYEPVENTDEA) is disordered. Ser428, Ser451, Ser453, Ser455, Ser457, and Ser458 each carry phosphoserine.

Its subcellular location is the cytoplasm. It localises to the golgi apparatus membrane. GAP activity stimulated by phosphatidylinositol 4,5-bisphosphate (PIP2). Its function is as follows. GTPase-activating protein (GAP) for ADP ribosylation factor 1 (ARF1). Hydrolysis of ARF1-bound GTP may lead to dissociation of coatomer from Golgi-derived membranes to allow fusion with target membranes. This is ADP-ribosylation factor GTPase-activating protein 3 from Pongo abelii (Sumatran orangutan).